A 994-amino-acid polypeptide reads, in one-letter code: Valine--tRNA ligase (994 aa).

The 'HIGH' region motif lies at 43 to 53 (PNVTGTLHMGH). A compositionally biased stretch (polar residues) spans 329-345 (QSGMPSGATSDTTNTPS). The interval 329 to 355 (QSGMPSGATSDTTNTPSDPEASSAANQ) is disordered. Positions 585–589 (KMSKS) match the 'KMSKS' region motif. Position 588 (lysine 588) interacts with ATP. A disordered region spans residues 692 to 714 (AHSPAQHQAGQDGQDAPRTPQPR). A compositionally biased stretch (low complexity) spans 696 to 707 (AQHQAGQDGQDA). Residues 928 to 994 (LIDVDAERVR…NGLRERRATL (67 aa)) adopt a coiled-coil conformation.

It belongs to the class-I aminoacyl-tRNA synthetase family. ValS type 1 subfamily. As to quaternary structure, monomer.

The protein localises to the cytoplasm. It carries out the reaction tRNA(Val) + L-valine + ATP = L-valyl-tRNA(Val) + AMP + diphosphate. Its function is as follows. Catalyzes the attachment of valine to tRNA(Val). As ValRS can inadvertently accommodate and process structurally similar amino acids such as threonine, to avoid such errors, it has a 'posttransfer' editing activity that hydrolyzes mischarged Thr-tRNA(Val) in a tRNA-dependent manner. This chain is Valine--tRNA ligase, found in Xylella fastidiosa (strain 9a5c).